Here is a 476-residue protein sequence, read N- to C-terminus: Bifunctional protein HldE (476 aa).

The tract at residues 1 to 319 is ribokinase; that stretch reads MKVSLPAFEK…EALALHHGES (319 aa). Residue 195–198 coordinates ATP; sequence NMSE. Asp264 is a catalytic residue. The interval 345–476 is cytidylyltransferase; that stretch reads MTNGCFDILH…AIIQNIMANQ (132 aa).

The protein in the N-terminal section; belongs to the carbohydrate kinase PfkB family. It in the C-terminal section; belongs to the cytidylyltransferase family. As to quaternary structure, homodimer.

It carries out the reaction D-glycero-beta-D-manno-heptose 7-phosphate + ATP = D-glycero-beta-D-manno-heptose 1,7-bisphosphate + ADP + H(+). The catalysed reaction is D-glycero-beta-D-manno-heptose 1-phosphate + ATP + H(+) = ADP-D-glycero-beta-D-manno-heptose + diphosphate. It participates in nucleotide-sugar biosynthesis; ADP-L-glycero-beta-D-manno-heptose biosynthesis; ADP-L-glycero-beta-D-manno-heptose from D-glycero-beta-D-manno-heptose 7-phosphate: step 1/4. The protein operates within nucleotide-sugar biosynthesis; ADP-L-glycero-beta-D-manno-heptose biosynthesis; ADP-L-glycero-beta-D-manno-heptose from D-glycero-beta-D-manno-heptose 7-phosphate: step 3/4. Catalyzes the phosphorylation of D-glycero-D-manno-heptose 7-phosphate at the C-1 position to selectively form D-glycero-beta-D-manno-heptose-1,7-bisphosphate. In terms of biological role, catalyzes the ADP transfer from ATP to D-glycero-beta-D-manno-heptose 1-phosphate, yielding ADP-D-glycero-beta-D-manno-heptose. The protein is Bifunctional protein HldE of Shewanella baltica (strain OS185).